The following is a 449-amino-acid chain: Glutamyl-tRNA(Gln) amidotransferase subunit A (449 aa).

Active-site charge relay system residues include lysine 51 and serine 126. The interval 103–128 (STTESSAHGKTLNPVDSSRVPGGSSG) is disordered. Residues 119-128 (SSRVPGGSSG) show a composition bias toward low complexity. Serine 150 acts as the Acyl-ester intermediate in catalysis.

Belongs to the amidase family. GatA subfamily. Heterotrimer of A, B and C subunits.

The enzyme catalyses L-glutamyl-tRNA(Gln) + L-glutamine + ATP + H2O = L-glutaminyl-tRNA(Gln) + L-glutamate + ADP + phosphate + H(+). Allows the formation of correctly charged Gln-tRNA(Gln) through the transamidation of misacylated Glu-tRNA(Gln) in organisms which lack glutaminyl-tRNA synthetase. The reaction takes place in the presence of glutamine and ATP through an activated gamma-phospho-Glu-tRNA(Gln). The protein is Glutamyl-tRNA(Gln) amidotransferase subunit A of Wolinella succinogenes (strain ATCC 29543 / DSM 1740 / CCUG 13145 / JCM 31913 / LMG 7466 / NCTC 11488 / FDC 602W) (Vibrio succinogenes).